The following is a 125-amino-acid chain: MPRTARGIYHNLKESEYVVSNGDATFFFFSEMYQNKFLDGYQKHREEFNKKINRITDTPLNMDMLADITFYSNVEKRGFHAWLKGVNTTWQEIHVYALRTMTKPCTQNWSRIRKPKLVERRKSMV.

A DNA-binding region (H-T-H motif) is located at residues 77-96 (RGFHAWLKGVNTTWQEIHVY).

It belongs to the podoviruses GP4 family.

This protein is believed to be a positive regulator of late transcription. It may function as a sigma-like component of the host RNA polymerase. Binds to a region of the A3 promoter located between nucleotides -50 and -100 relative to the transcription start site, that presents a sequence-directed curvature. Full induction of this curvature is needed for the transcription activation process. This chain is Late genes activator (4), found in Bacillus subtilis (Bacteriophage Nf).